A 242-amino-acid chain; its full sequence is Small ribosomal subunit protein uS2 (242 aa).

Belongs to the universal ribosomal protein uS2 family.

The protein is Small ribosomal subunit protein uS2 of Colwellia psychrerythraea (strain 34H / ATCC BAA-681) (Vibrio psychroerythus).